Consider the following 136-residue polypeptide: Photosystem II extrinsic protein U (136 aa).

Positions 1-28 (MKQLAQRLFSLALVLALVLGISVQSAQA) are cleaved as a signal peptide.

It belongs to the PsbU family. As to quaternary structure, PSII is composed of 1 copy each of membrane proteins PsbA, PsbB, PsbC, PsbD, PsbE, PsbF, PsbH, PsbI, PsbJ, PsbK, PsbL, PsbM, PsbT, PsbX, PsbY, PsbZ, Psb30/Ycf12, peripheral proteins PsbO, CyanoQ (PsbQ), PsbU, PsbV and a large number of cofactors. It forms dimeric complexes.

The protein localises to the cellular thylakoid membrane. One of the extrinsic, lumenal subunits of photosystem II (PSII). PSII is a light-driven water plastoquinone oxidoreductase, using light energy to abstract electrons from H(2)O, generating a proton gradient subsequently used for ATP formation. The extrinsic proteins stabilize the structure of photosystem II oxygen-evolving complex (OEC), the ion environment of oxygen evolution and protect the OEC against heat-induced inactivation. This Synechococcus elongatus (strain ATCC 33912 / PCC 7942 / FACHB-805) (Anacystis nidulans R2) protein is Photosystem II extrinsic protein U.